The following is a 282-amino-acid chain: Heterogeneous nuclear ribonucleoprotein C (282 aa).

One can recognise an RRM domain in the interval 17 to 88 (SRVFIGNLNT…QVLDINLAAE (72 aa)). 2 disordered regions span residues 131 to 177 (APPP…RLKG) and 208 to 282 (QSKQ…EEDS). Residues 141-147 (PSKRQRV) carry the Nuclear localization signal motif. The span at 161–172 (SKSGQRGGSSKS) shows a compositional bias: low complexity. Residues 177-217 (GDDLQAIKKELSQIKQRVDSLLENLERIERDQSKQDTKLDD) adopt a coiled-coil conformation. Basic and acidic residues-rich tracts occupy residues 208 to 217 (QSKQDTKLDD) and 224 to 235 (LKKEETGVKLIE). Composition is skewed to acidic residues over residues 236–257 (ETGD…EDTL) and 265–282 (KETE…EEDS).

The protein belongs to the RRM HNRPC family. RALY subfamily. As to quaternary structure, tetramer.

Its subcellular location is the nucleus. In terms of biological role, binds pre-mRNA and nucleates the assembly of 40S hnRNP particles. Interacts with poly-U tracts in the 3'-UTR or 5'-UTR of mRNA and modulates the stability and the level of translation of bound mRNA molecules. Single HNRNPC tetramers bind 230-240 nucleotides. Trimers of HNRNPC tetramers bind 700 nucleotides. May play a role in the early steps of spliceosome assembly and pre-mRNA splicing. N6-methyladenosine (m6A) has been shown to alter the local structure in mRNAs and long non-coding RNAs (lncRNAs) via a mechanism named 'm(6)A-switch', facilitating binding of HNRNPC, leading to regulation of mRNA splicing. The polypeptide is Heterogeneous nuclear ribonucleoprotein C (hnrnpc) (Xenopus laevis (African clawed frog)).